Here is a 358-residue protein sequence, read N- to C-terminus: tRNA-specific 2-thiouridylase MnmA (358 aa).

ATP-binding positions include 8 to 15 (GMSGGVDS) and Met-34. Residue Cys-103 is the Nucleophile of the active site. A disulfide bond links Cys-103 and Cys-199. ATP is bound at residue Gly-127. Residues 149 to 151 (KDQ) are interaction with tRNA. Cys-199 acts as the Cysteine persulfide intermediate in catalysis. The interaction with tRNA stretch occupies residues 305–306 (RY).

Belongs to the MnmA/TRMU family.

Its subcellular location is the cytoplasm. The catalysed reaction is S-sulfanyl-L-cysteinyl-[protein] + uridine(34) in tRNA + AH2 + ATP = 2-thiouridine(34) in tRNA + L-cysteinyl-[protein] + A + AMP + diphosphate + H(+). Functionally, catalyzes the 2-thiolation of uridine at the wobble position (U34) of tRNA, leading to the formation of s(2)U34. In Clostridium beijerinckii (strain ATCC 51743 / NCIMB 8052) (Clostridium acetobutylicum), this protein is tRNA-specific 2-thiouridylase MnmA.